Reading from the N-terminus, the 468-residue chain is 6-phospho-beta-galactosidase (468 aa).

Residues glutamine 19, histidine 116, asparagine 159, glutamate 160, and asparagine 297 each contribute to the D-galactose 6-phosphate site. The active-site Proton donor is the glutamate 160. The Nucleophile role is filled by glutamate 375. 4 residues coordinate D-galactose 6-phosphate: serine 428, tryptophan 429, lysine 435, and tyrosine 437.

The protein belongs to the glycosyl hydrolase 1 family.

The catalysed reaction is a 6-phospho-beta-D-galactoside + H2O = D-galactose 6-phosphate + an alcohol. The protein operates within carbohydrate metabolism; lactose degradation; D-galactose 6-phosphate and beta-D-glucose from lactose 6-phosphate: step 1/1. This Streptococcus pyogenes serotype M4 (strain MGAS10750) protein is 6-phospho-beta-galactosidase.